The following is a 223-amino-acid chain: Ubiquinone biosynthesis protein COQ4 homolog 2, mitochondrial (223 aa).

A mitochondrion-targeting transit peptide spans 1–26 (MFLRRVHPVRLGHAIQRSLTTTKSRN). Residues 21–32 (TTKSRNESTTTT) are compositionally biased toward low complexity. Residues 21 to 43 (TTKSRNESTTTTVEAPQAVPSPP) form a disordered region. The Zn(2+) site is built by histidine 177, aspartate 178, histidine 181, and glutamate 193.

This sequence belongs to the COQ4 family. As to quaternary structure, component of a multi-subunit COQ enzyme complex. The cofactor is Zn(2+).

It localises to the mitochondrion inner membrane. The enzyme catalyses a 4-hydroxy-3-methoxy-5-(all-trans-polyprenyl)benzoate + H(+) = a 2-methoxy-6-(all-trans-polyprenyl)phenol + CO2. Its pathway is cofactor biosynthesis; ubiquinone biosynthesis. Lyase that catalyzes the C1-decarboxylation of 4-hydroxy-3-methoxy-5-(all-trans-polyprenyl)benzoic acid into 2-methoxy-6-(all-trans-polyprenyl)phenol during ubiquinone biosynthesis. The chain is Ubiquinone biosynthesis protein COQ4 homolog 2, mitochondrial from Culex quinquefasciatus (Southern house mosquito).